The following is an 828-amino-acid chain: MKLSRRGFMKANAVAAAAAAAGLSVPGVARAVVGQQEAIKWDKAPCRFCGTGCGVLVGTQQGRVVACQGDPDAPVNRGLNCIKGYFLPKIMYGEDRLTQPLLRMKNGKYDKEGEFTPITWDQAFDVMEEKFKTALKEKGPESIGMFGSGQWTIWEGYAASKLFKAGFRSNNIDPNARHCMASAVVGFMRTFGMDEPMGCYDDIEQADAFVLWGANMAEMHPILWSRITNRRLSNQNVTVAVLSTYQHRSFELADNGIIFTPQSDLVILNYIANYIIQNNAINQDFFSKHVNLRKGATDIGYGLRPTHPLEKAAKNPGSDASEPMSFEDYKAFVAEYTLEKTAEMTGVPKDQLEQLAQLYADPNKKVISYWTMGFNQHTRGVWANNLVYNLHLLTGKISQPGCGPFSLTGQPSACGTAREVGTFAHRLPADMVVTNEKHRDICEKKWNIPSGTIPAKIGLHAVAQDRALKDGKLNVYWTMCTNNMQAGPNINEERMPGWRDPRNFIIVSDPYPTVSALAADLILPTAMWVEKEGAYGNAERRTQFWRQQVQAPGEAKSDLWQLVQFSRRFKTEEVWPEELLAKKPELRGKTLYEVLYATPEVSKFPVSELAEDQLNDESRELGFYLQKGLFEEYAWFGRGHGHDLAPFDDYHKARGLRWPVVNGKETQWRYSEGNDPYVKAGEGYKFYGKPDGKAVIFALPFEPAAEAPDEEYDLWLSTGRVLEHWHTGSMTRRVPELHRAFPEAVLFIHPLDAKARDLRRGDKVKVVSRRGEVISIVETRGRNRPPQGLVYMPFFDAAQLVNKLMLDATDPLSKETDFKKCAVKLEKV.

The segment at residues 1 to 31 is a signal peptide (tat-type signal); it reads MKLSRRGFMKANAVAAAAAAAGLSVPGVARA. Residues 39–95 enclose the 4Fe-4S Mo/W bis-MGD-type domain; that stretch reads IKWDKAPCRFCGTGCGVLVGTQQGRVVACQGDPDAPVNRGLNCIKGYFLPKIMYGED. [4Fe-4S] cluster contacts are provided by C46, C49, C53, and C81. Residues K83, Q150, N175, C179, 212–219, 243–247, 262–264, M372, Q376, N482, 508–509, K531, D558, and 718–727 each bind Mo-bis(molybdopterin guanine dinucleotide); these read WGANMAEM, STYQH, QSD, SD, and TGRVLEHWHT. Residue F794 coordinates substrate. Mo-bis(molybdopterin guanine dinucleotide) is bound by residues N802 and K819.

It belongs to the prokaryotic molybdopterin-containing oxidoreductase family. NasA/NapA/NarB subfamily. In terms of assembly, component of the periplasmic nitrate reductase NapAB complex composed of NapA and NapB. It depends on [4Fe-4S] cluster as a cofactor. Requires Mo-bis(molybdopterin guanine dinucleotide) as cofactor. Predicted to be exported by the Tat system. The position of the signal peptide cleavage has not been experimentally proven.

Its subcellular location is the periplasm. It carries out the reaction 2 Fe(II)-[cytochrome] + nitrate + 2 H(+) = 2 Fe(III)-[cytochrome] + nitrite + H2O. In terms of biological role, catalytic subunit of the periplasmic nitrate reductase complex NapAB. Receives electrons from NapB and catalyzes the reduction of nitrate to nitrite. The polypeptide is Periplasmic nitrate reductase (Shigella dysenteriae serotype 1 (strain Sd197)).